A 1828-amino-acid polypeptide reads, in one-letter code: Protein TIC 214 (1828 aa).

Transmembrane regions (helical) follow at residues 18-38 (IINSVVVVGLYYGFLTTFSIG), 64-84 (FITGQLMIFISIYYAPLHLAM), 87-107 (PYTITVLGLPYLLFHFFWKNH), 124-144 (FSIQSIFLNNFIFQLLNHFVL), 172-192 (VGWLIGHILFMKWVGLILFWI), and 222-242 (VNIFLFITCVYYLGRIPSPIL). The segment covering 270 to 279 (SEAKETKQEQ) has biased composition (basic and acidic residues). Disordered regions lie at residues 270-301 (SEAKETKQEQKGSFAEEDSSLGSEEREDPNKL), 618-637 (DLQQQERENEEESTEDHAIR), 741-763 (EFKTSNSDEKETKEKEKKREDKK), and 1533-1571 (KEEFGQGNLGSDTQNQQKDVEKDYAKSDIKKRGKKRQSK). Positions 1550 to 1562 (KDVEKDYAKSDIK) are enriched in basic and acidic residues.

This sequence belongs to the TIC214 family. As to quaternary structure, part of the Tic complex.

The protein resides in the plastid. It is found in the chloroplast inner membrane. Involved in protein precursor import into chloroplasts. May be part of an intermediate translocation complex acting as a protein-conducting channel at the inner envelope. The chain is Protein TIC 214 from Calycanthus floridus var. glaucus (Eastern sweetshrub).